We begin with the raw amino-acid sequence, 51 residues long: Lantibiotic lacticin-481 (51 aa).

Positions 1 to 24 (MKEQNSFNLLQEVTESELDLILGA) are excised as a propeptide. The beta-methyllanthionine (Thr-Cys) cross-link spans 33-38 (TISHEC). 2 cross-links (lanthionine (Ser-Cys)) span residues 35–49 (SHEC…VFTC) and 42–50 (SWQFVFTCC). Thr48 bears the (Z)-2,3-didehydrobutyrine mark.

The protein belongs to the type A lantibiotic family. Monomer or homodimer. In terms of processing, maturation of lantibiotics involves the enzymatic conversion of Thr, and Ser into dehydrated AA and the formation of thioether bonds with cysteine. This is followed by membrane translocation and cleavage of the modified precursor. It is established that the 2,3-didehydrobutyrine is the Z-isomer.

In terms of biological role, lanthionine-containing peptide antibiotic (lantibiotic) active on Gram-positive bacteria. The bactericidal activity of lantibiotics is based on depolarization of energized bacterial cytoplasmic membranes, initiated by the formation of aqueous transmembrane pores. Lacticin 481 is a broad spectrum bacteriocin exhibiting activity against a wide range of lactic acid bacteria and C.tyrobutyricum. This chain is Lantibiotic lacticin-481 (lctA), found in Lactococcus lactis subsp. lactis (Streptococcus lactis).